A 416-amino-acid chain; its full sequence is Calreticulin (416 aa).

N-linked (GlcNAc...) asparagine glycosylation is present at Asn-54. Cys-108 and Cys-140 form a disulfide bridge. The an alpha-D-glucoside site is built by Tyr-112, Lys-114, Tyr-131, and Asp-138. Tandem repeats lie at residues 194–205 (KQSGSVYTDWDI), 213–224 (DPEAKKPEDWED), 230–241 (DPEDKKPEGYDD), 248–259 (DPEAKKPEDWDD), 263–273 (GEWTAPTIPNP), 277–287 (GEWKPKKIKNP), and 291–301 (GKWKAPMIDNP). Residues 194-259 (KQSGSVYTDW…EAKKPEDWDD (66 aa)) form a 4 X approximate repeats region. Residues 209-281 (KQIKDPEAKK…NPDYKGEWKP (73 aa)) are disordered. Over residues 210 to 255 (QIKDPEAKKPEDWEDKEYIPDPEDKKPEGYDDIPKEITDPEAKKPE) the composition is skewed to basic and acidic residues. Residues 263–301 (GEWTAPTIPNPDYKGEWKPKKIKNPNFKGKWKAPMIDNP) form a 3 X approximate repeats region. Glu-321 contributes to the an alpha-D-glucoside binding site. The segment covering 349–378 (ETWGKNKDAEKAAFDEAEKKKEEEEAKDDP) has biased composition (basic and acidic residues). Residues 349–416 (ETWGKNKDAE…EDDEDVHDEL (68 aa)) are disordered. Residues 379–416 (TESDDEKPDEEGESDGEGDDESKDIDNEEDDEDVHDEL) show a composition bias toward acidic residues. Positions 413–416 (HDEL) match the Prevents secretion from ER motif.

This sequence belongs to the calreticulin family.

The protein resides in the endoplasmic reticulum lumen. Molecular calcium-binding chaperone promoting folding, oligomeric assembly and quality control in the ER via the calreticulin/calnexin cycle. This lectin may interact transiently with almost all of the monoglucosylated glycoproteins that are synthesized in the ER. The protein is Calreticulin of Berberis stolonifera (Barberry).